A 170-amino-acid polypeptide reads, in one-letter code: uncharacterized protein (170 aa).

Residues 1 to 148 form the Ferritin-like diiron domain; sequence MVKSQKVIDV…TIHDFFENAT (148 aa).

This is an uncharacterized protein from Ureaplasma parvum serovar 3 (strain ATCC 700970).